We begin with the raw amino-acid sequence, 289 residues long: Shikimate dehydrogenase (NADP(+)) (289 aa).

Residues 19–21 and Thr66 contribute to the shikimate site; that span reads SMS. The Proton acceptor role is filled by Lys70. 2 residues coordinate shikimate: Asn91 and Asp106. Residues 131-135, 155-160, and Leu229 each bind NADP(+); these read GAGGA and NRTLKK. Residue Tyr231 coordinates shikimate. Gly252 serves as a coordination point for NADP(+).

It belongs to the shikimate dehydrogenase family. In terms of assembly, homodimer.

It carries out the reaction shikimate + NADP(+) = 3-dehydroshikimate + NADPH + H(+). It participates in metabolic intermediate biosynthesis; chorismate biosynthesis; chorismate from D-erythrose 4-phosphate and phosphoenolpyruvate: step 4/7. Functionally, involved in the biosynthesis of the chorismate, which leads to the biosynthesis of aromatic amino acids. Catalyzes the reversible NADPH linked reduction of 3-dehydroshikimate (DHSA) to yield shikimate (SA). This Halothermothrix orenii (strain H 168 / OCM 544 / DSM 9562) protein is Shikimate dehydrogenase (NADP(+)).